Here is a 359-residue protein sequence, read N- to C-terminus: MKQIQVDLANRSYPIHIGPNLFEDQELFAPVVSGKKVLVVSNETIAPLYLDKISATLSARAAQVASVILPDGEQYKTLDYLNEIFDALLEGNFARDCVLVALGGGVIGDMTGFAAACYQRGVDFIQIPTTLLSQVDSSVGGKTAVNHPLGKNMIGAFYQPKLVVIDINCLKTLPAREFAAGMAEVIKYGIIRDSELFTWLEQNVSALKALDQDAIIHVIARCCEIKAEVVSEDETEQGVRALLNLGHTFGHAIEAEMGYGNWLHGEAVAAGMVLAAQTSVTLGLIDKSILCRIAALIQAFDLPVQAPESMDFNSFIKHMRRDKKVLGGQLRLVLPLGIGAAEVSSQASDAELAEVIRRP.

NAD(+)-binding positions include 71–76 (DGEQYK), 105–109 (GVIGD), 129–130 (TT), K142, K151, and 169–172 (CLKT). Positions 184, 247, and 264 each coordinate Zn(2+).

This sequence belongs to the sugar phosphate cyclases superfamily. Dehydroquinate synthase family. Co(2+) serves as cofactor. The cofactor is Zn(2+). It depends on NAD(+) as a cofactor.

The protein resides in the cytoplasm. It carries out the reaction 7-phospho-2-dehydro-3-deoxy-D-arabino-heptonate = 3-dehydroquinate + phosphate. Its pathway is metabolic intermediate biosynthesis; chorismate biosynthesis; chorismate from D-erythrose 4-phosphate and phosphoenolpyruvate: step 2/7. Catalyzes the conversion of 3-deoxy-D-arabino-heptulosonate 7-phosphate (DAHP) to dehydroquinate (DHQ). This chain is 3-dehydroquinate synthase, found in Shewanella amazonensis (strain ATCC BAA-1098 / SB2B).